Consider the following 103-residue polypeptide: Small ribosomal subunit protein uS10 (103 aa).

Belongs to the universal ribosomal protein uS10 family. Part of the 30S ribosomal subunit.

Its function is as follows. Involved in the binding of tRNA to the ribosomes. The polypeptide is Small ribosomal subunit protein uS10 (Neisseria gonorrhoeae).